The sequence spans 813 residues: Histone acetyltransferase KAT2B (813 aa).

2 disordered regions span residues 1 to 55 and 380 to 423; these read MAEA…GGSA and NSTS…EAKR. The segment covering 32 to 46 has biased composition (low complexity); sequence ASCGPATAVAAAGTA. Over residues 380–391 the composition is skewed to polar residues; sequence NSTSHEQINGGR. Basic and acidic residues predominate over residues 406-423; sequence PGEKRKMNNSHAPEEAKR. The region spanning 484-632 is the N-acetyltransferase domain; it reads LNQKPNKKIL…GATLMGCELN (149 aa). Catalysis depends on Glu551, which acts as the Proton donor/acceptor. Acetyl-CoA-binding positions include 555–557, 562–568, and 593–596; these read CAV, QVKGYGT, and YAIG. Residues 704-808 form the Bromo domain; that stretch reads KDPEQLYSTL…KFFFSKIKEA (105 aa).

The protein belongs to the acetyltransferase family. GCN5 subfamily. In terms of assembly, interacts with BCAS3. Interacts with SIRT1. Interacts with EP300, CREBBP and DDX17. Component of a large chromatin remodeling complex, at least composed of MYSM1, KAT2B/PCAF, RBM10 and KIF11/TRIP5. Interacts with KLF1; the interaction does not acetylate KLF1 and there is no enhancement of its transactivational activity. Interacts with NFE4. Interacts with MECOM. Interacts with NR2C2 (hypophosphorylated and unsumoylated form); the interaction promotes the transactivation activity of NR2C2. Interacts with NFE4. Interacts with MECOM. Interacts with E2F1; the interaction acetylates E2F1 augmenting its DNA-binding and transcriptional activity. Interacts with NPAS2, BMAL1 and CLOCK. Interacts (unsumoylated form) with NR2C1; the interaction promotes transactivation activity. Interacts with CEBPB. Interacts with NR4A3. Interacts with TBX5. Interacts with PLK4. Interacts with RB1; this interaction leads to RB1 acetylation. Interacts with VRK1.

It is found in the nucleus. Its subcellular location is the cytoplasm. The protein localises to the cytoskeleton. It localises to the microtubule organizing center. The protein resides in the centrosome. It carries out the reaction L-lysyl-[histone] + acetyl-CoA = N(6)-acetyl-L-lysyl-[histone] + CoA + H(+). The catalysed reaction is L-lysyl-[protein] + acetyl-CoA = N(6)-acetyl-L-lysyl-[protein] + CoA + H(+). The enzyme catalyses spermidine + acetyl-CoA = N(8)-acetylspermidine + CoA + H(+). Its function is as follows. Functions as a histone acetyltransferase (HAT) to promote transcriptional activation. Has significant histone acetyltransferase activity with core histones (H3 and H4), and also with nucleosome core particles. Has a a strong preference for acetylation of H3 at 'Lys-9' (H3K9ac). Also acetylates non-histone proteins, such as ACLY, MAPRE1/EB1, PLK4, RRP9/U3-55K and TBX5. Acts as a circadian transcriptional coactivator which enhances the activity of the circadian transcriptional activators: NPAS2-BMAL1 and CLOCK-BMAL1 heterodimers. Involved in heart and limb development by mediating acetylation of TBX5, acetylation regulating nucleocytoplasmic shuttling of TBX5. Acts as a negative regulator of centrosome amplification by mediating acetylation of PLK4. Acetylates RRP9/U3-55K, a core subunit of the U3 snoRNP complex, impairing pre-rRNA processing. Acetylates MAPRE1/EB1, promoting dynamic kinetochore-microtubule interactions in early mitosis. Also acetylates spermidine. This chain is Histone acetyltransferase KAT2B, found in Mus musculus (Mouse).